The primary structure comprises 718 residues: NF-kappa-B inhibitor zeta (718 aa).

The span at 1–17 (MIVDKLLDDSRGGEGLR) shows a compositional bias: basic and acidic residues. 2 disordered regions span residues 1-20 (MIVD…RDAA) and 58-108 (SAPG…RQQR). Positions 58 to 83 (SAPGSPGSDSSDFSSASSVSSCGAVE) are enriched in low complexity. A compositionally biased stretch (basic and acidic residues) spans 84–97 (SRSRGGARAERQPV). The region spanning 108-130 (RGPFQGVRVKNSVKELLLHIRSH) is the OCA domain. Residues 164–179 (KRKGPDSLSDGPACKR) carry the Nuclear localization signal motif. Residues 186–211 (QFLTPPQTPTPGESMEDVHLNEPKQE) are disordered. Over residues 201–211 (EDVHLNEPKQE) the composition is skewed to basic and acidic residues. The required for transcriptional activity stretch occupies residues 321-394 (AYEPNLFDGP…MVGHEMASDS (74 aa)). The interval 404–718 (MGNPMNTTQL…KSIQQRAPPY (315 aa)) is interaction with NFKB1/p50. ANK repeat units follow at residues 443–472 (DGDT…ALHM), 479–508 (NGQS…QVNT), 512–541 (WGRT…GSNQ), 551–580 (DGLT…HSPE), 582–607 (QELL…AVEA), 612–641 (SGRT…CLSF), and 648–681 (NGNT…DPST).

Interacts with NFKB1/p50. Interacts with RELA. Interacts with AKIRIN2. In terms of tissue distribution, expressed at high levels in peripheral blood leukocytes and lung, at moderate levels in liver, placenta, and at low levels in spleen, kidney, skeletal muscle and heart.

The protein localises to the nucleus. Functionally, involved in regulation of NF-kappa-B transcription factor complexes. Inhibits NF-kappa-B activity without affecting its nuclear translocation upon stimulation. Inhibits DNA-binding of RELA and NFKB1/p50, and of the NF-kappa-B p65-p50 heterodimer and the NF-kappa-B p50-p50 homodimer. Also seems to activate NF-kappa-B-mediated transcription. In vitro, upon association with NFKB1/p50 has transcriptional activation activity and, together with NFKB1/p50 and RELA, is recruited to LCN2 promoters. Promotes transcription of LCN2 and DEFB4. Is recruited to IL-6 promoters and activates IL-6 but decreases TNF-alpha production in response to LPS. Seems to be involved in the induction of inflammatory genes activated through TLR/IL-1 receptor signaling. Involved in the induction of T helper 17 cells (Th17) differentiation upon recognition of antigen by T cell antigen receptor (TCR). This Homo sapiens (Human) protein is NF-kappa-B inhibitor zeta (NFKBIZ).